Consider the following 317-residue polypeptide: Tenomodulin (317 aa).

At 1–30 the chain is on the cytoplasmic side; it reads MAKNPPENCEDCHILNAEAFKSKKICKSLK. The helical; Signal-anchor for type II membrane protein transmembrane segment at 31 to 50 threads the bilayer; it reads ICGLVFGILALTLIVLFWGS. The Extracellular segment spans residues 51-317; sequence KHFWPEVPKK…WWVARMLGRV (267 aa). In terms of domain architecture, BRICHOS spans 93–186; that stretch reads GNGTDETLEV…ICDNVTMYWI (94 aa). N-linked (GlcNAc...) asparagine glycosylation is present at Asn94. An intrachain disulfide couples Cys120 to Cys178. The N-linked (GlcNAc...) asparagine glycan is linked to Asn180. Ser239 is modified (phosphoserine).

Belongs to the chondromodulin-1 family. In terms of tissue distribution, highly expressed in hypovascular connective tissues such as tendons. Also has strong expression in adipose tissue.

It localises to the membrane. The protein localises to the nucleus envelope. Its subcellular location is the cytoplasm. May be an angiogenesis inhibitor. The polypeptide is Tenomodulin (TNMD) (Homo sapiens (Human)).